Here is a 279-residue protein sequence, read N- to C-terminus: NH(3)-dependent NAD(+) synthetase (279 aa).

Residue 46–53 coordinates ATP; the sequence is GISGGQDS. Asp52 lines the Mg(2+) pocket. Position 145 (Arg145) interacts with deamido-NAD(+). Thr165 is a binding site for ATP. Glu170 contributes to the Mg(2+) binding site. Residues Lys178 and Asp185 each coordinate deamido-NAD(+). Residues Lys194 and Thr216 each contribute to the ATP site. Position 265 to 266 (265 to 266) interacts with deamido-NAD(+); sequence HK.

Belongs to the NAD synthetase family. In terms of assembly, homodimer.

It carries out the reaction deamido-NAD(+) + NH4(+) + ATP = AMP + diphosphate + NAD(+) + H(+). Its pathway is cofactor biosynthesis; NAD(+) biosynthesis; NAD(+) from deamido-NAD(+) (ammonia route): step 1/1. Its function is as follows. Catalyzes the ATP-dependent amidation of deamido-NAD to form NAD. Uses ammonia as a nitrogen source. This Rhodococcus opacus (strain B4) protein is NH(3)-dependent NAD(+) synthetase.